The chain runs to 98 residues: NADH-ubiquinone oxidoreductase chain 4L (98 aa).

A run of 3 helical transmembrane segments spans residues 1–21 (MSMV…GLLI), 29–49 (SLLC…VTIL), and 61–81 (IILL…LVMV).

It belongs to the complex I subunit 4L family. In terms of assembly, core subunit of respiratory chain NADH dehydrogenase (Complex I) which is composed of 45 different subunits.

Its subcellular location is the mitochondrion inner membrane. The catalysed reaction is a ubiquinone + NADH + 5 H(+)(in) = a ubiquinol + NAD(+) + 4 H(+)(out). Functionally, core subunit of the mitochondrial membrane respiratory chain NADH dehydrogenase (Complex I) which catalyzes electron transfer from NADH through the respiratory chain, using ubiquinone as an electron acceptor. Part of the enzyme membrane arm which is embedded in the lipid bilayer and involved in proton translocation. The protein is NADH-ubiquinone oxidoreductase chain 4L (MT-ND4L) of Taxidea taxus (American badger).